The sequence spans 349 residues: Phosphoribosylformylglycinamidine cyclo-ligase (349 aa).

Belongs to the AIR synthase family.

The protein resides in the cytoplasm. It catalyses the reaction 2-formamido-N(1)-(5-O-phospho-beta-D-ribosyl)acetamidine + ATP = 5-amino-1-(5-phospho-beta-D-ribosyl)imidazole + ADP + phosphate + H(+). The protein operates within purine metabolism; IMP biosynthesis via de novo pathway; 5-amino-1-(5-phospho-D-ribosyl)imidazole from N(2)-formyl-N(1)-(5-phospho-D-ribosyl)glycinamide: step 2/2. The protein is Phosphoribosylformylglycinamidine cyclo-ligase of Albidiferax ferrireducens (strain ATCC BAA-621 / DSM 15236 / T118) (Rhodoferax ferrireducens).